Consider the following 277-residue polypeptide: Caspase-3 (277 aa).

Position 1 is an N-acetylmethionine (Met1). 2 propeptides span residues 1-9 (MENTENSVD) and 10-28 (SKSI…KSVD). Residue Lys11 is modified to N6-acetyllysine. Ser26 carries the phosphoserine modification. Residues His121 and Cys163 contribute to the active site. Cys163 is modified (S-nitrosocysteine; in inhibited form).

Belongs to the peptidase C14A family. As to quaternary structure, heterotetramer that consists of two anti-parallel arranged heterodimers, each one formed by a 17 kDa (p17) and a 12 kDa (p12) subunit. Interacts with BIRC6/bruce. Cleavage by granzyme B, caspase-6, caspase-8 and caspase-10 generates the two active subunits. Additional processing of the propeptides is likely due to the autocatalytic activity of the activated protease. Active heterodimers between the small subunit of caspase-7 protease and the large subunit of caspase-3 also occur and vice versa. Post-translationally, S-nitrosylated on its catalytic site cysteine in unstimulated cell lines and denitrosylated upon activation of the Fas apoptotic pathway, associated with an increase in intracellular caspase activity. Fas therefore activates caspase-3 not only by inducing the cleavage of the caspase zymogen to its active subunits, but also by stimulating the denitrosylation of its active site thiol. In terms of processing, ubiquitinated by BIRC6; this activity is inhibited by DIABLO/SMAC.

The protein resides in the cytoplasm. The enzyme catalyses Strict requirement for an Asp residue at positions P1 and P4. It has a preferred cleavage sequence of Asp-Xaa-Xaa-Asp-|- with a hydrophobic amino-acid residue at P2 and a hydrophilic amino-acid residue at P3, although Val or Ala are also accepted at this position.. Its activity is regulated as follows. Inhibited by BIRC6; following inhibition of BIRC6-caspase binding by DIABLO/SMAC, BIRC6 is subjected to caspase cleavage, leading to an increase in active caspases. Its function is as follows. Involved in the activation cascade of caspases responsible for apoptosis execution. At the onset of apoptosis, it proteolytically cleaves poly(ADP-ribose) polymerase PARP1 at a '216-Asp-|-Gly-217' bond. Cleaves and activates sterol regulatory element binding proteins (SREBPs) between the basic helix-loop-helix leucine zipper domain and the membrane attachment domain. Cleaves and activates caspase-6, -7 and -9 (CASP6, CASP7 and CASP9, respectively). Cleaves and inactivates interleukin-18 (IL18). Triggers cell adhesion in sympathetic neurons through RET cleavage. Cleaves IL-1 beta between an Asp and an Ala, releasing the mature cytokine which is involved in a variety of inflammatory processes. Cleaves and inhibits serine/threonine-protein kinase AKT1 in response to oxidative stress. Acts as an inhibitor of type I interferon production during virus-induced apoptosis by mediating cleavage of antiviral proteins CGAS, IRF3 and MAVS, thereby preventing cytokine overproduction. Also involved in pyroptosis by mediating cleavage and activation of gasdermin-E (GSDME). Cleaves XRCC4 and phospholipid scramblase proteins XKR4, XKR8 and XKR9, leading to promote phosphatidylserine exposure on apoptotic cell surface. Cleaves BIRC6 following inhibition of BIRC6-caspase binding by DIABLO/SMAC. In Macaca fascicularis (Crab-eating macaque), this protein is Caspase-3 (CASP3).